A 444-amino-acid chain; its full sequence is MVKNHDPKNEMQDMLTPLDAEEAAKTKLRLDMREIPKSSIKPEHFHLMYLLEQHSPYFIDAELTELRDSFQIHYDINDNHTPFDNIKSFTKNEKLRYLLNIKNLEEVNRTRYTFVLAPDELFFTRDGLPIAKTRGLQNVVDPLPVSEAEFLTRYKALVICAFNEKQSFDALVEGNLELHKGTPFETKVIEAATLDLLTAFLDEQYQKQEQDYSQNYAYVRKVGHTVFKWVAIGMTTLSVLLIAFLAFLYFSVMKHNERIEKGYQAFVKEDYTQVLNTYDDLDGKKLDKEALYIYAKSYIQTNKQGLEKDKKENLLNNVTPNSNKDYLLYWMELGQGHLDEAINIATYLDDNDITKLALINKLNEIKNNGDLSNDKRSEETKKYNDKLQDILDKEKQVKDEKAKSEEEKAKAKDEKLKQQEENEKKQKEQAQKDKEKRQEAERKK.

At methionine 1–tryptophan 229 the chain is on the cytoplasmic side. Residues valine 230 to phenylalanine 250 form a helical membrane-spanning segment. Residues serine 251–lysine 444 lie on the Extracellular side of the membrane. The disordered stretch occupies residues lysine 366–lysine 444. The segment covering serine 372 to lysine 444 has biased composition (basic and acidic residues). Residues leucine 387 to lysine 443 are a coiled coil.

The protein belongs to the EssB family.

The protein localises to the cell membrane. Component of the type VII secretion system (Ess). Required for the secretion of EsxA. In Staphylococcus aureus (strain MRSA252), this protein is Type VII secretion system protein EssB.